We begin with the raw amino-acid sequence, 161 residues long: Transcription antitermination protein NusB (161 aa).

Positions 1–22 (MNLSDFKPGEGTEVPEEEKSVS) are disordered.

Belongs to the NusB family.

Involved in transcription antitermination. Required for transcription of ribosomal RNA (rRNA) genes. Binds specifically to the boxA antiterminator sequence of the ribosomal RNA (rrn) operons. This Hydrogenovibrio crunogenus (strain DSM 25203 / XCL-2) (Thiomicrospira crunogena) protein is Transcription antitermination protein NusB.